Consider the following 397-residue polypeptide: Mannan endo-1,4-beta-mannosidase 1 (397 aa).

Residues Met-1–Ala-23 form the signal peptide. Residues Trp-83 and Asn-198 each coordinate substrate. Glu-199 serves as the catalytic Proton donor. A substrate-binding site is contributed by Tyr-276. Glu-316 acts as the Nucleophile in catalysis. Trp-354 lines the substrate pocket.

It belongs to the glycosyl hydrolase 5 (cellulase A) family.

It is found in the secreted. It catalyses the reaction Random hydrolysis of (1-&gt;4)-beta-D-mannosidic linkages in mannans, galactomannans and glucomannans.. In Solanum lycopersicum (Tomato), this protein is Mannan endo-1,4-beta-mannosidase 1 (MAN1).